Reading from the N-terminus, the 368-residue chain is F-box only protein 28 (368 aa).

Basic and acidic residues predominate over residues 1–11 (MAAAAEERMAE). Positions 1 to 56 (MAAAAEERMAEEGGGGQGDGGSSLASGSTQRQPPPPAPQHPQPGSQALPAPALAPD) are disordered. Gly residues predominate over residues 12-21 (EGGGGQGDGG). Over residues 22–31 (SSLASGSTQR) the composition is skewed to low complexity. Residues 32-41 (QPPPPAPQHP) show a composition bias toward pro residues. Residues 42–56 (QPGSQALPAPALAPD) show a composition bias toward low complexity. Residues 61–109 (NNTLVALPIVAIENILSFMSYDEISQLRLVCKRMDLVCQRMLNQGFLKV) enclose the F-box domain. 2 positions are modified to phosphoserine: Ser235 and Ser242. Residue Thr270 is modified to Phosphothreonine. Residues 328–368 (MESAVGNSSGSGQNEESPRKRKKATEAIDSLRKSKRLRNRK) form a disordered region. Positions 333–342 (GNSSGSGQNE) are enriched in low complexity. Ser344 carries the post-translational modification Phosphoserine.

In terms of assembly, part of a SCF (SKP1-cullin-F-box) protein ligase complex.

It is found in the chromosome. The protein resides in the centromere. Its subcellular location is the kinetochore. Probably recognizes and binds to some phosphorylated proteins and promotes their ubiquitination and degradation. This Homo sapiens (Human) protein is F-box only protein 28 (FBXO28).